Consider the following 115-residue polypeptide: MNMFIVMMINIILSMSLIIIAFWLPQLNLYTEKANPYECGFDPMSSARLPFSMKFFLVAITFLLFDLEIALLLPLPWAIQIPNIKITMLTAFILVTVLALGLAYEWMQKGLEWTE.

3 helical membrane passes run 4–24 (FIVM…AFWL), 55–75 (FFLV…LLPL), and 86–106 (ITML…AYEW).

This sequence belongs to the complex I subunit 3 family. In terms of assembly, core subunit of respiratory chain NADH dehydrogenase (Complex I) which is composed of 45 different subunits. Interacts with TMEM186. Interacts with TMEM242.

It localises to the mitochondrion inner membrane. The enzyme catalyses a ubiquinone + NADH + 5 H(+)(in) = a ubiquinol + NAD(+) + 4 H(+)(out). Core subunit of the mitochondrial membrane respiratory chain NADH dehydrogenase (Complex I) which catalyzes electron transfer from NADH through the respiratory chain, using ubiquinone as an electron acceptor. Essential for the catalytic activity of complex I. In Reithrodontomys fulvescens (Fulvous harvest mouse), this protein is NADH-ubiquinone oxidoreductase chain 3.